A 248-amino-acid polypeptide reads, in one-letter code: MRILLSNDDGVFAQGLAELYKELKEDHEITVIAPDRNCSGASNALSLQQPLRMEQMQSGFYAVNGTPSDCVHVGVNSFLQQDPELVISGINHGANLGDDVIYSGTVAAATEGRYMGLPAIAVSLCAHTSDNFVSAAKFVRRIVTHLQAHPLPADQILNVNIPDLPYGEIKGIKVTRQGRRHRAKTMIKDTDPRGKTIFWYGPVGEEQDAGPGTDFHAISEGFCSVTPLSVDMTAHQSLEDVRQWITKI.

4 residues coordinate a divalent metal cation: Asp8, Asp9, Ser39, and Asn91.

This sequence belongs to the SurE nucleotidase family. A divalent metal cation is required as a cofactor.

Its subcellular location is the cytoplasm. It catalyses the reaction a ribonucleoside 5'-phosphate + H2O = a ribonucleoside + phosphate. Its function is as follows. Nucleotidase that shows phosphatase activity on nucleoside 5'-monophosphates. This Pseudoalteromonas atlantica (strain T6c / ATCC BAA-1087) protein is 5'-nucleotidase SurE.